The following is a 173-amino-acid chain: Translation initiation factor IF-3 (173 aa).

Belongs to the IF-3 family. As to quaternary structure, monomer.

The protein localises to the cytoplasm. IF-3 binds to the 30S ribosomal subunit and shifts the equilibrium between 70S ribosomes and their 50S and 30S subunits in favor of the free subunits, thus enhancing the availability of 30S subunits on which protein synthesis initiation begins. This is Translation initiation factor IF-3 from Methylorubrum extorquens (strain CM4 / NCIMB 13688) (Methylobacterium extorquens).